Here is a 483-residue protein sequence, read N- to C-terminus: tRNA sulfurtransferase (483 aa).

The THUMP domain maps to Pro-62–Arg-166. Residues Leu-184–Ile-185, Lys-266, Gly-288, and Gln-297 contribute to the ATP site. A disulfide bond links Cys-345 and Cys-457. A Rhodanese domain is found at Leu-405 to Pro-483. Residue Cys-457 is the Cysteine persulfide intermediate of the active site.

Belongs to the ThiI family.

It localises to the cytoplasm. The catalysed reaction is [ThiI sulfur-carrier protein]-S-sulfanyl-L-cysteine + a uridine in tRNA + 2 reduced [2Fe-2S]-[ferredoxin] + ATP + H(+) = [ThiI sulfur-carrier protein]-L-cysteine + a 4-thiouridine in tRNA + 2 oxidized [2Fe-2S]-[ferredoxin] + AMP + diphosphate. It catalyses the reaction [ThiS sulfur-carrier protein]-C-terminal Gly-Gly-AMP + S-sulfanyl-L-cysteinyl-[cysteine desulfurase] + AH2 = [ThiS sulfur-carrier protein]-C-terminal-Gly-aminoethanethioate + L-cysteinyl-[cysteine desulfurase] + A + AMP + 2 H(+). Its pathway is cofactor biosynthesis; thiamine diphosphate biosynthesis. Functionally, catalyzes the ATP-dependent transfer of a sulfur to tRNA to produce 4-thiouridine in position 8 of tRNAs, which functions as a near-UV photosensor. Also catalyzes the transfer of sulfur to the sulfur carrier protein ThiS, forming ThiS-thiocarboxylate. This is a step in the synthesis of thiazole, in the thiamine biosynthesis pathway. The sulfur is donated as persulfide by IscS. This is tRNA sulfurtransferase from Yersinia pseudotuberculosis serotype IB (strain PB1/+).